The sequence spans 315 residues: Ribosomal RNA small subunit methyltransferase H (315 aa).

S-adenosyl-L-methionine contacts are provided by residues 37 to 39, aspartate 57, phenylalanine 83, aspartate 105, and glutamine 112; that span reads GGH.

It belongs to the methyltransferase superfamily. RsmH family.

The protein localises to the cytoplasm. It catalyses the reaction cytidine(1402) in 16S rRNA + S-adenosyl-L-methionine = N(4)-methylcytidine(1402) in 16S rRNA + S-adenosyl-L-homocysteine + H(+). Its function is as follows. Specifically methylates the N4 position of cytidine in position 1402 (C1402) of 16S rRNA. The sequence is that of Ribosomal RNA small subunit methyltransferase H from Pseudomonas fluorescens (strain SBW25).